The chain runs to 677 residues: UPF0313 protein RPA0679 (677 aa).

The Radical SAM core domain occupies 335–601; it reads AWDMIKTSVT…VEAIKGLRQR (267 aa). Residues Cys349, Cys353, and Cys356 each contribute to the [4Fe-4S] cluster site. Residues 635–677 form a disordered region; that stretch reads RPDQLVPAHQPPGTGKAAGTRRPVRGDGPKPQRFTTKGVRLVK.

This sequence belongs to the UPF0313 family. Requires [4Fe-4S] cluster as cofactor.

The protein is UPF0313 protein RPA0679 of Rhodopseudomonas palustris (strain ATCC BAA-98 / CGA009).